Reading from the N-terminus, the 393-residue chain is Phosphoglycerate kinase (393 aa).

Substrate-binding positions include 21–23 (DFN), R36, 59–62 (HLGR), R118, and R151. ATP is bound by residues K201, E323, and 349–352 (GGDS).

It belongs to the phosphoglycerate kinase family. Monomer.

The protein resides in the cytoplasm. The enzyme catalyses (2R)-3-phosphoglycerate + ATP = (2R)-3-phospho-glyceroyl phosphate + ADP. The protein operates within carbohydrate degradation; glycolysis; pyruvate from D-glyceraldehyde 3-phosphate: step 2/5. The protein is Phosphoglycerate kinase of Moorella thermoacetica (strain ATCC 39073 / JCM 9320).